A 190-amino-acid polypeptide reads, in one-letter code: Zinc metalloproteinase/disintegrin (190 aa).

The Peptidase M12B domain occupies 1–11 (NHNPECIVNEP). In terms of domain architecture, Disintegrin spans 19 to 105 (PPVCGNELLE…ECPADVFHKN (87 aa)). Residues V21, N24, L26, E28, E31, and D34 each contribute to the Ca(2+) site. Cystine bridges form between C33–C51, C35–C46, C45–C68, C59–C65, C64–C90, and C77–C97. Residues 83 to 85 (ECD) carry the D/ECD-tripeptide motif. Ca(2+) is bound by residues D85, P86, E88, D100, and V101. The propeptide occupies 104–190 (KNGQPCLDNY…DNSPGQNGPC (87 aa)).

It belongs to the venom metalloproteinase (M12B) family. P-III subfamily. As to quaternary structure, monomer. The cofactor is Zn(2+). In terms of tissue distribution, expressed by the venom gland.

The protein localises to the secreted. In terms of biological role, impairs hemostasis in the envenomed animal. Its function is as follows. Inhibits platelet aggregation induced by ADP, thrombin, platelet-activating factor and collagen. Acts by inhibiting fibrinogen interaction with platelet receptors GPIIb/GPIIIa (ITGA2B/ITGB3). The sequence is that of Zinc metalloproteinase/disintegrin from Gloydius brevicauda (Korean slamosa snake).